The chain runs to 502 residues: Cytochrome P450 2J2 (502 aa).

A heme-binding site is contributed by C448.

It belongs to the cytochrome P450 family. Heme is required as a cofactor. In terms of tissue distribution, highly expressed in heart, present at lower levels in liver, kidney and skeletal muscle (at protein level).

The protein resides in the endoplasmic reticulum membrane. Its subcellular location is the microsome membrane. It carries out the reaction (5Z,8Z,11Z,14Z)-eicosatetraenoate + reduced [NADPH--hemoprotein reductase] + O2 = 5,6-epoxy-(8Z,11Z,14Z)-eicosatrienoate + oxidized [NADPH--hemoprotein reductase] + H2O + H(+). It catalyses the reaction (5Z,8Z,11Z,14Z)-eicosatetraenoate + reduced [NADPH--hemoprotein reductase] + O2 = (8R,9S)-epoxy-(5Z,11Z,14Z)-eicosatrienoate + oxidized [NADPH--hemoprotein reductase] + H2O + H(+). The catalysed reaction is (5Z,8Z,11Z,14Z)-eicosatetraenoate + reduced [NADPH--hemoprotein reductase] + O2 = (8S,9R)-epoxy-(5Z,11Z,14Z)-eicosatrienoate + oxidized [NADPH--hemoprotein reductase] + H2O + H(+). The enzyme catalyses (5Z,8Z,11Z,14Z)-eicosatetraenoate + reduced [NADPH--hemoprotein reductase] + O2 = (11R,12S)-epoxy-(5Z,8Z,14Z)-eicosatrienoate + oxidized [NADPH--hemoprotein reductase] + H2O + H(+). It carries out the reaction (5Z,8Z,11Z,14Z)-eicosatetraenoate + reduced [NADPH--hemoprotein reductase] + O2 = (11S,12R)-epoxy-(5Z,8Z,14Z)-eicosatrienoate + oxidized [NADPH--hemoprotein reductase] + H2O + H(+). It catalyses the reaction (5Z,8Z,11Z,14Z)-eicosatetraenoate + reduced [NADPH--hemoprotein reductase] + O2 = (14R,15S)-epoxy-(5Z,8Z,11Z)-eicosatrienoate + oxidized [NADPH--hemoprotein reductase] + H2O + H(+). The catalysed reaction is (5Z,8Z,11Z,14Z)-eicosatetraenoate + reduced [NADPH--hemoprotein reductase] + O2 = (14S,15R)-epoxy-(5Z,8Z,11Z)-eicosatrienoate + oxidized [NADPH--hemoprotein reductase] + H2O + H(+). The enzyme catalyses (15S)-hydroperoxy-(5Z,8Z,11Z,13E)-eicosatetraenoate = (13S)-hydroxy-(14S,15S)-epoxy-(5Z,8Z,11Z)-eicosatrienoate. It carries out the reaction (15S)-hydroperoxy-(5Z,8Z,11Z,13E)-eicosatetraenoate = (13R)-hydroxy-(14S,15S)-epoxy-(5Z,8Z,11Z)-eicosatrienoate. It catalyses the reaction (5Z,8Z,11Z,14Z,17Z)-eicosapentaenoate + reduced [NADPH--hemoprotein reductase] + O2 = (17R,18S)-epoxy-(5Z,8Z,11Z,14Z)-eicosatetraenoate + oxidized [NADPH--hemoprotein reductase] + H2O + H(+). The catalysed reaction is (5Z,8Z,11Z,14Z,17Z)-eicosapentaenoate + reduced [NADPH--hemoprotein reductase] + O2 = (17S,18R)-epoxy-(5Z,8Z,11Z,14Z)-eicosatetraenoate + oxidized [NADPH--hemoprotein reductase] + H2O + H(+). The enzyme catalyses (4Z,7Z,10Z,13Z,16Z,19Z)-docosahexaenoate + reduced [NADPH--hemoprotein reductase] + O2 = (19R,20S)-epoxy-(4Z,7Z,10Z,13Z,16Z)-docosapentaenoate + oxidized [NADPH--hemoprotein reductase] + H2O + H(+). It carries out the reaction (4Z,7Z,10Z,13Z,16Z,19Z)-docosahexaenoate + reduced [NADPH--hemoprotein reductase] + O2 = (19S,20R)-epoxy-(4Z,7Z,10Z,13Z,16Z)-docosapentaenoate + oxidized [NADPH--hemoprotein reductase] + H2O + H(+). It catalyses the reaction albendazole + reduced [NADPH--hemoprotein reductase] + O2 = hydroxyalbendazole + oxidized [NADPH--hemoprotein reductase] + H2O + H(+). The catalysed reaction is albendazole + reduced [NADPH--hemoprotein reductase] + O2 = albendazole S-oxide + oxidized [NADPH--hemoprotein reductase] + H2O + H(+). The enzyme catalyses fenbendazole + reduced [NADPH--hemoprotein reductase] + O2 = fenbendazole S-oxide + oxidized [NADPH--hemoprotein reductase] + H2O + H(+). Its pathway is lipid metabolism; arachidonate metabolism. Its function is as follows. A cytochrome P450 monooxygenase involved in the metabolism of polyunsaturated fatty acids (PUFA) in the cardiovascular system. Mechanistically, uses molecular oxygen inserting one oxygen atom into a substrate, and reducing the second into a water molecule, with two electrons provided by NADPH via cytochrome P450 reductase (NADPH--hemoprotein reductase). Catalyzes the epoxidation of double bonds of PUFA. Converts arachidonic acid to four regioisomeric epoxyeicosatrienoic acids (EpETrE), likely playing a major role in the epoxidation of endogenous cardiac arachidonic acid pools. In endothelial cells, participates in eicosanoids metabolism by converting hydroperoxide species into hydroxy epoxy metabolites. In combination with 15-lipoxygenase metabolizes arachidonic acid and converts hydroperoxyicosatetraenoates (HpETEs) into hydroxy epoxy eicosatrienoates (HEETs), which are precursors of vasodilatory trihydroxyicosatrienoic acids (THETAs). This hydroperoxide isomerase activity is NADPH- and O2-independent. Catalyzes the monooxygenation of a various xenobiotics, such as danazol, amiodarone, terfenadine, astemizole, thioridazine, tamoxifen, cyclosporin A and nabumetone. Catalyzes hydroxylation of the anthelmintics albendazole and fenbendazole. Catalyzes the sulfoxidation of fenbedazole. The polypeptide is Cytochrome P450 2J2 (Homo sapiens (Human)).